We begin with the raw amino-acid sequence, 521 residues long: MTNIHNDKILILDFGAQYTQLIARRIRELGVYCEIWAWDHNPAEIAGFGAKGIILSGGPESTTLPGAPAAPQEVFDSGLPIFGICYGMQTLAAQLGGATEAADQREFGHAEVNVINPDALFKGLSDHGGEPKLNVWMSHGDHVSVAPPGFTITATTDRIPVAAMANEEKRWYGVQFHPEVTHTLQGQALLRRFVVDVCGCQTLWTAANIIDDQIARVREQVGDDEVILGLSGGVDSSVVAALLHKAIGEKLTCVFVDTGLLRWQEGDQVMAMFAEHMGVKVVRVNAADRYFAALEGVSDPEAKRKIIGNLFVEIFDEESNKLKNAKWLAQGTIYPDVIESAGSKTGKAHVIKSHHNVGGLPEHMKLGLVEPLRELFKDEVRRLGVELGLPRTMVYRHPFPGPGLGVRILGEVKREYAELLAKADAIFIDELRKADLYDKTSQAFAVFLPVKSVGVVGDARAYEWVIALRAVETIDFMTAHWAHLPYEFLGTVSNRIINELRGVSRVVYDISGKPPATIEWE.

Residues 8 to 203 (KILILDFGAQ…VVDVCGCQTL (196 aa)) form the Glutamine amidotransferase type-1 domain. The active-site Nucleophile is cysteine 85. Residues histidine 177 and glutamate 179 contribute to the active site. One can recognise a GMPS ATP-PPase domain in the interval 204 to 396 (WTAANIIDDQ…LGLPRTMVYR (193 aa)). An ATP-binding site is contributed by 231–237 (SGGVDSS).

Homodimer.

The catalysed reaction is XMP + L-glutamine + ATP + H2O = GMP + L-glutamate + AMP + diphosphate + 2 H(+). Its pathway is purine metabolism; GMP biosynthesis; GMP from XMP (L-Gln route): step 1/1. In terms of biological role, catalyzes the synthesis of GMP from XMP. The polypeptide is GMP synthase [glutamine-hydrolyzing] (Stenotrophomonas maltophilia (strain K279a)).